Consider the following 1305-residue polypeptide: Cyclin-G-associated kinase (1305 aa).

S2 is modified (N-acetylserine). Phosphoserine occurs at positions 2 and 16. Residues L40–A317 form the Protein kinase domain. ATP is bound by residues L46 to V54 and K69. Catalysis depends on D173, which acts as the Proton acceptor. Positions S397 to E564 constitute a Phosphatase tensin-type domain. Residue S454 is modified to Phosphoserine. Residues S570 to E708 enclose the C2 tensin-type domain. 2 disordered regions span residues V707 to I732 and F747 to T854. Residue S768 is modified to Phosphoserine. T774 carries the post-translational modification Phosphothreonine. Residues S776–F789 are compositionally biased toward polar residues. S781 carries the post-translational modification Phosphoserine. A Phosphothreonine modification is found at T792. Residues L805–V816 show a composition bias toward polar residues. 3 positions are modified to phosphoserine: S809, S824, and S827. Residues D822 to A832 are compositionally biased toward acidic residues. Positions S836–P848 are enriched in basic and acidic residues. S938 is subject to Phosphoserine. The tract at residues D1037–R1139 is disordered. Low complexity predominate over residues D1084–L1099. Over residues T1111–P1132 the composition is skewed to polar residues. At R1122 the chain carries Omega-N-methylarginine. The residue at position 1171 (S1171) is a Phosphoserine. The 65-residue stretch at S1241 to F1305 folds into the J domain.

The protein belongs to the protein kinase superfamily. Ser/Thr protein kinase family.

The protein localises to the cytoplasm. It is found in the perinuclear region. It localises to the golgi apparatus. The protein resides in the trans-Golgi network. Its subcellular location is the cell junction. The protein localises to the focal adhesion. It is found in the cytoplasmic vesicle. It localises to the clathrin-coated vesicle. The enzyme catalyses L-seryl-[protein] + ATP = O-phospho-L-seryl-[protein] + ADP + H(+). It catalyses the reaction L-threonyl-[protein] + ATP = O-phospho-L-threonyl-[protein] + ADP + H(+). Associates with cyclin G and CDK5. Seems to act as an auxilin homolog that is involved in the uncoating of clathrin-coated vesicles by Hsc70 in non-neuronal cells. Expression oscillates slightly during the cell cycle, peaking at G1. May play a role in clathrin-mediated endocytosis and intracellular trafficking, and in the dynamics of clathrin assembly/disassembly. The polypeptide is Cyclin-G-associated kinase (Mus musculus (Mouse)).